The chain runs to 162 residues: Probable chemoreceptor glutamine deamidase CheD (162 aa).

It belongs to the CheD family.

The enzyme catalyses L-glutaminyl-[protein] + H2O = L-glutamyl-[protein] + NH4(+). Functionally, probably deamidates glutamine residues to glutamate on methyl-accepting chemotaxis receptors (MCPs), playing an important role in chemotaxis. This is Probable chemoreceptor glutamine deamidase CheD from Clostridium novyi (strain NT).